Here is a 2071-residue protein sequence, read N- to C-terminus: GTPase-activating protein BEM2 (2071 aa).

Disordered regions lie at residues 1–115 (MPLK…QAHK) and 171–195 (AAPA…SERP). Low complexity-rich tracts occupy residues 16–31 (PQSC…QSSC) and 42–55 (SSIS…SKNN). Residues 62–80 (SNGSVYSDETTLKTAQTHY) are compositionally biased toward polar residues. A compositionally biased stretch (low complexity) spans 81–110 (TQQGQQAKPQQHTQQQQQQPQTPMQLQVPT). Residues 181–191 (HQPTASLSSIG) are compositionally biased toward polar residues. Residues 471–738 (DTEKVANQIH…MEMSLKMEPP (268 aa)) enclose the Ras-GEF domain. A compositionally biased stretch (polar residues) spans 787–811 (PSTKNNNSSQASNRISQLSVNSTPH). Disordered regions lie at residues 787-819 (PSTK…SSSA), 1645-1676 (RSVL…ARTS), and 1702-1738 (SVSS…GMGK). Composition is skewed to low complexity over residues 1656–1676 (SVSS…ARTS) and 1702–1726 (SVSS…ASPN). One can recognise a PH domain in the interval 1751 to 1853 (SGFTSSSSQY…WMKAITLSKR (103 aa)). One can recognise a Rho-GAP domain in the interval 1872–2070 (VPVEDVCERE…HLIRNPEHYF (199 aa)).

Its function is as follows. GTPase-activating protein (GAP) for RHO proteins. Required for polarized growth and maintenance of cell polarity. In Eremothecium gossypii (strain ATCC 10895 / CBS 109.51 / FGSC 9923 / NRRL Y-1056) (Yeast), this protein is GTPase-activating protein BEM2 (BEM2).